The chain runs to 231 residues: NADH-ubiquinone oxidoreductase chain 4 (231 aa).

The next 6 helical transmembrane spans lie at 1–21 (PIAGSMVLAAILLKLGGYGII), 34–54 (MFLPFLVLALWGAILANLTCL), 63–85 (IAYSSISHMGLVVAAIIIQTPWG), 89–111 (AMALMVAHGFTSSSLFCLANTTY), 128–148 (ILPMATTWWLLANLLNIATPP), and 156–176 (LLIMSALFNWCPTTIILLGLS).

This sequence belongs to the complex I subunit 4 family.

The protein localises to the mitochondrion membrane. The enzyme catalyses a ubiquinone + NADH + 5 H(+)(in) = a ubiquinol + NAD(+) + 4 H(+)(out). Its function is as follows. Core subunit of the mitochondrial membrane respiratory chain NADH dehydrogenase (Complex I) that is believed to belong to the minimal assembly required for catalysis. Complex I functions in the transfer of electrons from NADH to the respiratory chain. The immediate electron acceptor for the enzyme is believed to be ubiquinone. The sequence is that of NADH-ubiquinone oxidoreductase chain 4 (MT-ND4) from Bothriechis lateralis (Side-striped palm pitviper).